A 405-amino-acid polypeptide reads, in one-letter code: Phosphoglycerate kinase (405 aa).

Substrate is bound by residues 21-23 (DFN), Arg-36, 59-62 (HLGR), Arg-119, and Arg-161. Residues Lys-212, Gly-301, Glu-332, and 361 to 364 (GGDS) contribute to the ATP site.

Belongs to the phosphoglycerate kinase family. In terms of assembly, monomer.

It localises to the cytoplasm. The catalysed reaction is (2R)-3-phosphoglycerate + ATP = (2R)-3-phospho-glyceroyl phosphate + ADP. It functions in the pathway carbohydrate degradation; glycolysis; pyruvate from D-glyceraldehyde 3-phosphate: step 2/5. The protein is Phosphoglycerate kinase of Leuconostoc mesenteroides subsp. mesenteroides (strain ATCC 8293 / DSM 20343 / BCRC 11652 / CCM 1803 / JCM 6124 / NCDO 523 / NBRC 100496 / NCIMB 8023 / NCTC 12954 / NRRL B-1118 / 37Y).